Consider the following 208-residue polypeptide: Thymidylate kinase (208 aa).

10–17 (GPEGSGKT) is an ATP binding site.

The protein belongs to the thymidylate kinase family.

The catalysed reaction is dTMP + ATP = dTDP + ADP. In terms of biological role, phosphorylation of dTMP to form dTDP in both de novo and salvage pathways of dTTP synthesis. The polypeptide is Thymidylate kinase (Bacillus anthracis).